Reading from the N-terminus, the 308-residue chain is Mu-like prophage FluMu major head subunit (308 aa).

This sequence to phage Mu protein T.

This is Mu-like prophage FluMu major head subunit from Haemophilus influenzae (strain ATCC 51907 / DSM 11121 / KW20 / Rd).